The chain runs to 91 residues: Insertion element IS1 2 protein InsA (91 aa).

Belongs to the IS1 elements InsA family.

Its function is as follows. Absolutely required for transposition of IS1. The chain is Insertion element IS1 2 protein InsA (insA2) from Escherichia coli (strain K12).